Here is a 340-residue protein sequence, read N- to C-terminus: Extracellular matrix protein-binding protein emp (340 aa).

The first 26 residues, 1–26 (MKKKLLVLTMSTLFATQIMNSNHAKA), serve as a signal peptide directing secretion.

Its subcellular location is the cell surface. In terms of biological role, adhesin that binds to the host cell extracellular matrix proteins fibronectin, fibrinogen, collagen, and vitronectin. The chain is Extracellular matrix protein-binding protein emp (emp) from Staphylococcus aureus (strain USA300).